The chain runs to 160 residues: SsrA-binding protein (160 aa).

Positions 135–160 are disordered; sequence KTHDKRETIKERDWKREQSRILRDRG. Residues 138–160 show a composition bias toward basic and acidic residues; that stretch reads DKRETIKERDWKREQSRILRDRG.

Belongs to the SmpB family.

It is found in the cytoplasm. Required for rescue of stalled ribosomes mediated by trans-translation. Binds to transfer-messenger RNA (tmRNA), required for stable association of tmRNA with ribosomes. tmRNA and SmpB together mimic tRNA shape, replacing the anticodon stem-loop with SmpB. tmRNA is encoded by the ssrA gene; the 2 termini fold to resemble tRNA(Ala) and it encodes a 'tag peptide', a short internal open reading frame. During trans-translation Ala-aminoacylated tmRNA acts like a tRNA, entering the A-site of stalled ribosomes, displacing the stalled mRNA. The ribosome then switches to translate the ORF on the tmRNA; the nascent peptide is terminated with the 'tag peptide' encoded by the tmRNA and targeted for degradation. The ribosome is freed to recommence translation, which seems to be the essential function of trans-translation. This chain is SsrA-binding protein, found in Sphingomonas elodea.